Here is a 429-residue protein sequence, read N- to C-terminus: Enolase (429 aa).

Glutamine 163 is a binding site for (2R)-2-phosphoglycerate. Glutamate 205 (proton donor) is an active-site residue. The Mg(2+) site is built by aspartate 242, glutamate 286, and aspartate 313. Residues lysine 338, arginine 367, serine 368, and lysine 389 each coordinate (2R)-2-phosphoglycerate. The active-site Proton acceptor is lysine 338.

Belongs to the enolase family. It depends on Mg(2+) as a cofactor.

The protein resides in the cytoplasm. The protein localises to the secreted. It localises to the cell surface. It catalyses the reaction (2R)-2-phosphoglycerate = phosphoenolpyruvate + H2O. Its pathway is carbohydrate degradation; glycolysis; pyruvate from D-glyceraldehyde 3-phosphate: step 4/5. Catalyzes the reversible conversion of 2-phosphoglycerate (2-PG) into phosphoenolpyruvate (PEP). It is essential for the degradation of carbohydrates via glycolysis. This Thermoanaerobacter sp. (strain X514) protein is Enolase.